The following is a 331-amino-acid chain: Ketol-acid reductoisomerase (NADP(+)) (331 aa).

The region spanning 2-182 (AQLFYDSDAD…GGTRAGILET (181 aa)) is the KARI N-terminal Rossmann domain. NADP(+) is bound by residues 25-28 (YGSQ), S51, S53, and 83-86 (DEFQ). H108 is an active-site residue. G134 contacts NADP(+). A KARI C-terminal knotted domain is found at 183 to 328 (NFKEETETDL…KGLRAMFSWL (146 aa)). The Mg(2+) site is built by D191, E195, E227, and E231. Residue S252 participates in substrate binding.

It belongs to the ketol-acid reductoisomerase family. Mg(2+) serves as cofactor.

The catalysed reaction is (2R)-2,3-dihydroxy-3-methylbutanoate + NADP(+) = (2S)-2-acetolactate + NADPH + H(+). It catalyses the reaction (2R,3R)-2,3-dihydroxy-3-methylpentanoate + NADP(+) = (S)-2-ethyl-2-hydroxy-3-oxobutanoate + NADPH + H(+). The protein operates within amino-acid biosynthesis; L-isoleucine biosynthesis; L-isoleucine from 2-oxobutanoate: step 2/4. Its pathway is amino-acid biosynthesis; L-valine biosynthesis; L-valine from pyruvate: step 2/4. Involved in the biosynthesis of branched-chain amino acids (BCAA). Catalyzes an alkyl-migration followed by a ketol-acid reduction of (S)-2-acetolactate (S2AL) to yield (R)-2,3-dihydroxy-isovalerate. In the isomerase reaction, S2AL is rearranged via a Mg-dependent methyl migration to produce 3-hydroxy-3-methyl-2-ketobutyrate (HMKB). In the reductase reaction, this 2-ketoacid undergoes a metal-dependent reduction by NADPH to yield (R)-2,3-dihydroxy-isovalerate. The sequence is that of Ketol-acid reductoisomerase (NADP(+)) from Prochlorococcus marinus (strain MIT 9211).